Here is a 27-residue protein sequence, read N- to C-terminus: MLMYQTRRTYQNSNNIAVVHLLKPAWR.

The polypeptide is Protein YqiM (Escherichia coli (strain K12)).